Reading from the N-terminus, the 36-residue chain is Cytochrome b6-f complex subunit 7 (36 aa).

The helical transmembrane segment at 9 to 29 (NGAFIMIGLTLLGLAWGFVII) threads the bilayer.

The protein belongs to the PetM family. The 4 large subunits of the cytochrome b6-f complex are cytochrome b6, subunit IV (17 kDa polypeptide, PetD), cytochrome f and the Rieske protein, while the 4 small subunits are PetG, PetL, PetM and PetN. The complex functions as a dimer.

It localises to the cellular thylakoid membrane. Its function is as follows. Component of the cytochrome b6-f complex, which mediates electron transfer between photosystem II (PSII) and photosystem I (PSI), cyclic electron flow around PSI, and state transitions. This Synechocystis sp. (strain ATCC 27184 / PCC 6803 / Kazusa) protein is Cytochrome b6-f complex subunit 7.